Here is a 518-residue protein sequence, read N- to C-terminus: Wax ester synthase/diacylglycerol acyltransferase 6 (518 aa).

Positions 1-17 (MEIKTRRDTSETSVRKD) are enriched in basic and acidic residues. The tract at residues 1 to 29 (MEIKTRRDTSETSVRKDDEEEVEEEQPLS) is disordered. Residues 1–213 (MEIKTRRDTS…LMAGSRGDSR (213 aa)) lie on the Cytoplasmic side of the membrane. H163 serves as the catalytic Proton acceptor. The tract at residues 185-205 (PDELPSLPNQNRSSSRSSRLM) is disordered. Residues 214–234 (FLWLVMVIWSAIMLVLNTVCD) form a helical membrane-spanning segment. Over 235-518 (ALEFIATTMF…VQERDSRSLD (284 aa)) the chain is Lumenal. N-linked (GlcNAc...) asparagine glycosylation is present at N430.

It in the N-terminal section; belongs to the long-chain O-acyltransferase family. In terms of tissue distribution, expressed in roots, stems, leaves, flowers and siliques.

The protein resides in the cell membrane. It localises to the endoplasmic reticulum membrane. The protein localises to the golgi apparatus membrane. It carries out the reaction an acyl-CoA + a 1,2-diacyl-sn-glycerol = a triacyl-sn-glycerol + CoA. The catalysed reaction is a long chain fatty alcohol + a fatty acyl-CoA = a wax ester + CoA. The protein operates within glycerolipid metabolism; triacylglycerol biosynthesis. It functions in the pathway lipid metabolism. Its function is as follows. Bifunctional wax ester synthase/diacylglycerol acyltransferase that uses acyl-CoAs with 16, 18 and 20 carbons as substrates, preferably in combination with 16:0ol alcohol. Involved in cuticular wax biosynthesis. This chain is Wax ester synthase/diacylglycerol acyltransferase 6, found in Arabidopsis thaliana (Mouse-ear cress).